A 328-amino-acid chain; its full sequence is dITP/XTP pyrophosphatase (328 aa).

The tract at residues 1–129 is unknown; that stretch reads MSEKIYEYKD…ATSEQGFGDT (129 aa). The NTP pyrophosphatase stretch occupies residues 130 to 324; that stretch reads ILIATRNEGK…KLMEVFPAWQ (195 aa). 134-139 is a substrate binding site; sequence TRNEGK. Residue Asp196 is the Proton acceptor of the active site. Asp196 contributes to the Mg(2+) binding site. Substrate is bound by residues Ser197, 280 to 283, Lys303, and 308 to 309; these read FGYD and HR.

It belongs to the HAM1 NTPase family. As to quaternary structure, homodimer. Requires Mg(2+) as cofactor.

The enzyme catalyses XTP + H2O = XMP + diphosphate + H(+). It carries out the reaction dITP + H2O = dIMP + diphosphate + H(+). The catalysed reaction is ITP + H2O = IMP + diphosphate + H(+). Its function is as follows. Pyrophosphatase that catalyzes the hydrolysis of nucleoside triphosphates to their monophosphate derivatives, with a high preference for the non-canonical purine nucleotides XTP (xanthosine triphosphate), dITP (deoxyinosine triphosphate) and ITP. Seems to function as a house-cleaning enzyme that removes non-canonical purine nucleotides from the nucleotide pool, thus preventing their incorporation into DNA/RNA and avoiding chromosomal lesions. In Streptococcus pyogenes serotype M6 (strain ATCC BAA-946 / MGAS10394), this protein is dITP/XTP pyrophosphatase.